A 277-amino-acid chain; its full sequence is Large ribosomal subunit protein uL2 (277 aa).

Disordered stretches follow at residues 1–23 (MAIK…DFAE), 36–58 (PLHK…GGGH), and 219–277 (TVRG…RKNK). Positions 8 to 20 (PTSNGRRGMTSSD) are enriched in polar residues. The segment covering 258–277 (KTRKKKNKSDKFIVRRRKNK) has biased composition (basic residues).

It belongs to the universal ribosomal protein uL2 family. As to quaternary structure, part of the 50S ribosomal subunit. Forms a bridge to the 30S subunit in the 70S ribosome.

Its function is as follows. One of the primary rRNA binding proteins. Required for association of the 30S and 50S subunits to form the 70S ribosome, for tRNA binding and peptide bond formation. It has been suggested to have peptidyltransferase activity; this is somewhat controversial. Makes several contacts with the 16S rRNA in the 70S ribosome. The protein is Large ribosomal subunit protein uL2 of Bacillus licheniformis (strain ATCC 14580 / DSM 13 / JCM 2505 / CCUG 7422 / NBRC 12200 / NCIMB 9375 / NCTC 10341 / NRRL NRS-1264 / Gibson 46).